The sequence spans 260 residues: Membrane protein insertase YidC 1 (260 aa).

An N-terminal signal peptide occupies residues 1–22; it reads MLKSYRAVLVSLSLLLVFVLSG. Cys23 carries the N-palmitoyl cysteine lipid modification. A lipid anchor (S-diacylglycerol cysteine) is attached at Cys23. 5 helical membrane passes run 29-49, 52-72, 133-153, 164-184, and 213-233; these read IDAH…SFMI, VAHH…TLVI, LAGC…YYAI, FLWV…IAAL, and MPAM…LYWI.

This sequence belongs to the OXA1/ALB3/YidC family. Type 2 subfamily.

The protein resides in the cell membrane. Required for the insertion and/or proper folding and/or complex formation of integral membrane proteins into the membrane. Involved in integration of membrane proteins that insert both dependently and independently of the Sec translocase complex, as well as at least some lipoproteins. This Bacillus anthracis protein is Membrane protein insertase YidC 1.